The sequence spans 53 residues: uncharacterized protein (53 aa).

The next 2 membrane-spanning stretches (helical) occupy residues 3–22 (LFGMIFLIATVAFILLGVLL) and 26–45 (AFFFVSILTLIAAIVLFTVL).

It is found in the cell membrane. This is an uncharacterized protein from Bacillus subtilis (strain 168).